The following is a 142-amino-acid chain: MALLSPLLSLSSVPPITSIAVSSSSFPIKLQNVSVALLPSFGQRLVAHGPVIAQKRGTVVAMVSAAAEETAGEDGDQSKVEEANISVQNLPLESKLQLKLEQKIKMKMAKKIRLRRNRLMRKRKLRKRGAWPPSKMKKLKNV.

A chloroplast-targeting transit peptide spans 1-62 (MALLSPLLSL…AQKRGTVVAM (62 aa)). The segment at 123-142 (RKLRKRGAWPPSKMKKLKNV) is disordered.

Belongs to the chloroplast-specific ribosomal protein cL37 family. In terms of assembly, component of the chloroplast large ribosomal subunit (LSU). Mature 70S chloroplast ribosomes of higher plants consist of a small (30S) and a large (50S) subunit. The 30S small subunit contains 1 molecule of ribosomal RNA (16S rRNA) and 24 different proteins. The 50S large subunit contains 3 rRNA molecules (23S, 5S and 4.5S rRNA) and 33 different proteins.

The protein localises to the plastid. The protein resides in the chloroplast. Its function is as follows. Component of the chloroplast ribosome (chloro-ribosome), a dedicated translation machinery responsible for the synthesis of chloroplast genome-encoded proteins, including proteins of the transcription and translation machinery and components of the photosynthetic apparatus. This chain is Large ribosomal subunit protein cL37 alpha (PSRP5), found in Spinacia oleracea (Spinach).